The chain runs to 316 residues: Serpentine receptor class delta-45 (316 aa).

7 helical membrane-spanning segments follow: residues 8–28 (VFYP…IFII), 42–62 (ILLV…LIQI), 91–111 (YFLT…TIYL), 128–148 (VTFF…SLIL), 184–204 (IIIT…GLLL), 234–254 (LQVF…LVLA), and 266–286 (FFSV…LYSV).

This sequence belongs to the nematode receptor-like protein srd family.

The protein localises to the membrane. In Caenorhabditis elegans, this protein is Serpentine receptor class delta-45 (srd-45).